Reading from the N-terminus, the 345-residue chain is MNMTELKGALIGCGFFAVNQMHAWKDVKGAGIAAICDRDPKRLKLVGDQFGIERRYGDAAALFADGGFDFVDIATTVQSHRALVEMAAAHKVPAICQKPFAKSLSDAKAMVRTCENADIPLMVHENFRWQTPIQAVKAVLESGAIGEPFWGRFSFRSGFDVFSGQPYLAEGERFIIEDLGIHTLDIARFILGDVATLTARTKRVNPKIKGEDVATILLDHQNGATSIVDVSYATKLGTEPFPETLIDIDGTQGTIRLSQGYRLEVTGPNGMTISDASPQLLSWASRPWHNIQESVLAIQQHWTDRLSSGGETSTSGADNLKTFALVEAAYESAANGRTVDIGAML.

An NAD(+)-binding site is contributed by 15–16 (FF). 4 residues coordinate Mg(2+): Trp-24, Lys-25, Val-27, and Ala-30. Residues Asp-37, Ser-79, 97-98 (QK), Asn-126, and 165-167 (QPY) contribute to the NAD(+) site. Lys-98 is a substrate binding site. Substrate is bound by residues Gln-165, Asp-178, His-182, and Tyr-232.

This sequence belongs to the Gfo/Idh/MocA family.

It catalyses the reaction D-apiofuranose + NAD(+) = D-apionolactone + NADH + H(+). It participates in carbohydrate metabolism. In terms of biological role, involved in catabolism of D-apiose. Catalyzes oxidation of D-apiose to D-apionolactone. The chain is D-apiose dehydrogenase from Rhizobium rhizogenes (strain K84 / ATCC BAA-868) (Agrobacterium radiobacter).